The primary structure comprises 404 residues: Probable tRNA sulfurtransferase (404 aa).

The region spanning E60–T165 is the THUMP domain. ATP contacts are provided by residues M183–L184, H208–F209, R265, G287, and Q296.

It belongs to the ThiI family.

Its subcellular location is the cytoplasm. The enzyme catalyses [ThiI sulfur-carrier protein]-S-sulfanyl-L-cysteine + a uridine in tRNA + 2 reduced [2Fe-2S]-[ferredoxin] + ATP + H(+) = [ThiI sulfur-carrier protein]-L-cysteine + a 4-thiouridine in tRNA + 2 oxidized [2Fe-2S]-[ferredoxin] + AMP + diphosphate. It catalyses the reaction [ThiS sulfur-carrier protein]-C-terminal Gly-Gly-AMP + S-sulfanyl-L-cysteinyl-[cysteine desulfurase] + AH2 = [ThiS sulfur-carrier protein]-C-terminal-Gly-aminoethanethioate + L-cysteinyl-[cysteine desulfurase] + A + AMP + 2 H(+). The protein operates within cofactor biosynthesis; thiamine diphosphate biosynthesis. In terms of biological role, catalyzes the ATP-dependent transfer of a sulfur to tRNA to produce 4-thiouridine in position 8 of tRNAs, which functions as a near-UV photosensor. Also catalyzes the transfer of sulfur to the sulfur carrier protein ThiS, forming ThiS-thiocarboxylate. This is a step in the synthesis of thiazole, in the thiamine biosynthesis pathway. The sulfur is donated as persulfide by IscS. The chain is Probable tRNA sulfurtransferase from Enterococcus faecalis (strain ATCC 700802 / V583).